Here is a 64-residue protein sequence, read N- to C-terminus: Metallothionein (64 aa).

It belongs to the metallothionein superfamily. Type 4 family.

Metallothioneins have a high content of cysteine residues that bind various heavy metals. In Sterechinus neumayeri (Antarctic sea urchin), this protein is Metallothionein.